We begin with the raw amino-acid sequence, 292 residues long: Coatomer subunit epsilon (292 aa).

The protein belongs to the COPE family. In terms of assembly, oligomeric complex that consists of at least the alpha, beta, beta', gamma, delta, epsilon and zeta subunits.

The protein localises to the cytoplasm. It localises to the golgi apparatus membrane. The protein resides in the cytoplasmic vesicle. It is found in the COPI-coated vesicle membrane. Functionally, the coatomer is a cytosolic protein complex that binds to dilysine motifs and reversibly associates with Golgi non-clathrin-coated vesicles, which further mediate biosynthetic protein transport from the ER, via the Golgi up to the trans Golgi network. The coatomer complex is required for budding from Golgi membranes, and is essential for the retrograde Golgi-to-ER transport of dilysine-tagged proteins. In Caenorhabditis elegans, this protein is Coatomer subunit epsilon (cope-1).